Here is a 287-residue protein sequence, read N- to C-terminus: MGIRAFRPYTPGTRERVVSDYAEITRNEPEKSLLVSKHRRKGRNNRGVITCRHRGGGHKRLYRIIDFKRDKRNVPGKIVSIEYDPNRNARISLVYYEDGEKRYILTPAGVHVGTPIIAGDETPIEVGNAMPLQNIPLGTTVHNVELVAGKGGQIVRAAGASAQVVAKEGNYVALKLPSTEVRLVRKECYATIGAVGNAEVRNTSLGKAGRKRWLGRRPEVRGSVMNPVDHPHGGGEGRAPIGRSGPVTPWGKPALGRKTRKKNKQSDCLIQRRRRKSSKRGRGGRDA.

Residues 216-287 form a disordered region; sequence RRPEVRGSVM…SKRGRGGRDA (72 aa). A compositionally biased stretch (basic residues) spans 271–287; that stretch reads QRRRRKSSKRGRGGRDA.

This sequence belongs to the universal ribosomal protein uL2 family. As to quaternary structure, part of the 50S ribosomal subunit. Forms a bridge to the 30S subunit in the 70S ribosome.

In terms of biological role, one of the primary rRNA binding proteins. Required for association of the 30S and 50S subunits to form the 70S ribosome, for tRNA binding and peptide bond formation. It has been suggested to have peptidyltransferase activity; this is somewhat controversial. Makes several contacts with the 16S rRNA in the 70S ribosome. In Synechococcus sp. (strain ATCC 27144 / PCC 6301 / SAUG 1402/1) (Anacystis nidulans), this protein is Large ribosomal subunit protein uL2.